The sequence spans 286 residues: uncharacterized protein (286 aa).

Residues 152–182 (YPSTTTSVTPGKKGEKTTKVDGFSSPLNQDT) are disordered. The chain crosses the membrane as a helical span at residues 198-218 (VLIAVTLFVSGIAITVFVIFE). The tract at residues 239–278 (RRPRKEDQQPGTAESQSDTQPKKVGQEAPNSSSPKKAVEI) is disordered. Positions 247–257 (QPGTAESQSDT) are enriched in polar residues.

The protein localises to the membrane. This is an uncharacterized protein from Bos taurus (Bovine).